Here is a 1273-residue protein sequence, read N- to C-terminus: DNA-directed RNA polymerase subunit beta (1273 aa).

Belongs to the RNA polymerase beta chain family. As to quaternary structure, the RNAP catalytic core consists of 2 alpha, 1 beta, 1 beta' and 1 omega subunit. When a sigma factor is associated with the core the holoenzyme is formed, which can initiate transcription.

The enzyme catalyses RNA(n) + a ribonucleoside 5'-triphosphate = RNA(n+1) + diphosphate. DNA-dependent RNA polymerase catalyzes the transcription of DNA into RNA using the four ribonucleoside triphosphates as substrates. The protein is DNA-directed RNA polymerase subunit beta of Aster yellows witches'-broom phytoplasma (strain AYWB).